A 216-amino-acid polypeptide reads, in one-letter code: Glutathione S-transferase D5 (216 aa).

Positions Met-1–Asp-80 constitute a GST N-terminal domain. Residues His-50–Ile-52 and Glu-64–Arg-66 contribute to the glutathione site. One can recognise a GST C-terminal domain in the interval Asp-86 to Phe-207.

Belongs to the GST superfamily. Delta family. In terms of assembly, homodimer.

The catalysed reaction is RX + glutathione = an S-substituted glutathione + a halide anion + H(+). Conjugation of reduced glutathione to a wide number of exogenous and endogenous hydrophobic electrophiles. May be involved in detoxification. The sequence is that of Glutathione S-transferase D5 from Drosophila melanogaster (Fruit fly).